A 715-amino-acid polypeptide reads, in one-letter code: Photosystem I P700 chlorophyll a apoprotein A1 (715 aa).

Transmembrane regions (helical) follow at residues 60 to 83, 146 to 169, 185 to 209, 281 to 299, 336 to 359, 375 to 401, 423 to 445, and 521 to 539; these read VFSAHFGQLAIIFIWLSGMYFHGA, LYSTAIGGLIFAALMLFAGWFHYH, LNHHLAGLLGLGSLSWAGHQVHVSL, TVHHHLAIAVLFLIAGHMY, WHAQLALNLAMLGSLTIIVAHHMY, LSLFTHHMWIGGFLVVGAAAHAAIFMV, AIISHLNWACIFLGFHSFGLYIH, and FLVHHIHAFTIHVTVLILL. Positions 563 and 572 each coordinate [4Fe-4S] cluster. Helical transmembrane passes span 579–600 and 654–676; these read HVFLGLFWMYNAISVVIFHFSW and LSAYGLLFLGAHFVWAFSLMFLF. Histidine 665 is a chlorophyll a' binding site. Chlorophyll a-binding residues include methionine 673 and tyrosine 681. Residue tryptophan 682 participates in phylloquinone binding. A helical membrane pass occupies residues 714 to 715; the sequence is AE.

Belongs to the PsaA/PsaB family. In terms of assembly, the PsaA/B heterodimer binds the P700 chlorophyll special pair and subsequent electron acceptors. PSI consists of a core antenna complex that captures photons, and an electron transfer chain that converts photonic excitation into a charge separation. The eukaryotic PSI reaction center is composed of at least 11 subunits. The cofactor is P700 is a chlorophyll a/chlorophyll a' dimer, A0 is one or more chlorophyll a, A1 is one or both phylloquinones and FX is a shared 4Fe-4S iron-sulfur center..

The protein localises to the plastid. It localises to the chloroplast thylakoid membrane. It catalyses the reaction reduced [plastocyanin] + hnu + oxidized [2Fe-2S]-[ferredoxin] = oxidized [plastocyanin] + reduced [2Fe-2S]-[ferredoxin]. In terms of biological role, psaA and PsaB bind P700, the primary electron donor of photosystem I (PSI), as well as the electron acceptors A0, A1 and FX. PSI is a plastocyanin-ferredoxin oxidoreductase, converting photonic excitation into a charge separation, which transfers an electron from the donor P700 chlorophyll pair to the spectroscopically characterized acceptors A0, A1, FX, FA and FB in turn. Oxidized P700 is reduced on the lumenal side of the thylakoid membrane by plastocyanin. This chain is Photosystem I P700 chlorophyll a apoprotein A1, found in Phlegmariurus squarrosus (Rock tassel fern).